The following is a 371-amino-acid chain: MRVGIPTETKNNEFRVAITPAGVAELTRRGHEVLIQAGAGEGSAITDADFKAAGAQLVGTADQVWADADLLLKVKEPIAAEYGRLRHGQILFTFLHLAASRACTDALLDSGTTSIAYETVQTPDGALPLLAPMSEVAGRLAAQVGAYHLMRTQGGRGVLMGGVPGVEPADVVVIGAGTAGYNAARIANGMGATVTVLDINIDKLRQLDAEFCGRIHTRYSSAYELEGAVKRADLVIGAVLVPGAKAPKLVSNSLVAHMKPGAVLVDIAIDQGGCFEGSRPTTYDHPTFAVHDTLFYCVANMPASVPKTSTYALTNATMPYVLELADHGWRAACRSNPALAKGLSTHEGALLSERVATDLGVPFTEPASVLA.

Residues R15 and K75 each contribute to the substrate site. The active-site Proton donor/acceptor is H96. NAD(+) contacts are provided by residues S134, 178-179 (TA), D198, K203, S220, 239-240 (VL), 267-270 (IAID), R279, and 298-301 (VANM). D270 acts as the Proton donor/acceptor in catalysis. 2 residues coordinate Mg(2+): E323 and H327.

This sequence belongs to the AlaDH/PNT family. Homohexamer. Trimer of dimers. Requires Mg(2+) as cofactor.

The protein localises to the secreted. The catalysed reaction is L-alanine + NAD(+) + H2O = pyruvate + NH4(+) + NADH + H(+). It functions in the pathway amino-acid degradation; L-alanine degradation via dehydrogenase pathway; NH(3) and pyruvate from L-alanine: step 1/1. In terms of biological role, catalyzes the reversible reductive amination of pyruvate to L-alanine. However, since the physiological environment of M.tuberculosis has a neutral pH, it can be assumed that the enzyme catalyzes exclusively the formation of L-alanine. May play a role in cell wall synthesis as L-alanine is an important constituent of the peptidoglycan layer. This Mycobacterium tuberculosis (strain CDC 1551 / Oshkosh) protein is Alanine dehydrogenase (ald).